The sequence spans 398 residues: NADH-quinone oxidoreductase subunit D (398 aa).

This sequence belongs to the complex I 49 kDa subunit family. As to quaternary structure, NDH-1 is composed of 14 different subunits. Subunits NuoB, C, D, E, F, and G constitute the peripheral sector of the complex.

It localises to the cell inner membrane. It carries out the reaction a quinone + NADH + 5 H(+)(in) = a quinol + NAD(+) + 4 H(+)(out). NDH-1 shuttles electrons from NADH, via FMN and iron-sulfur (Fe-S) centers, to quinones in the respiratory chain. The immediate electron acceptor for the enzyme in this species is believed to be ubiquinone. Couples the redox reaction to proton translocation (for every two electrons transferred, four hydrogen ions are translocated across the cytoplasmic membrane), and thus conserves the redox energy in a proton gradient. The chain is NADH-quinone oxidoreductase subunit D from Bradyrhizobium sp. (strain ORS 278).